The sequence spans 65 residues: Small ribosomal subunit protein bS21 (65 aa).

The segment at 45–65 (GRLKRSRSRRRAQRANEERNS) is disordered. Basic residues predominate over residues 48-57 (KRSRSRRRAQ).

This sequence belongs to the bacterial ribosomal protein bS21 family.

This is Small ribosomal subunit protein bS21 from Pelodictyon phaeoclathratiforme (strain DSM 5477 / BU-1).